The chain runs to 359 residues: MESADFYEVEPRPPMSSHLQSPPHAPSNAAFGFPRGAGPAPPPAPPAAPEPLGGICEHETSIDISAYIDPAAFNDEFLADLFQHSRQQEKAKAAAGPAGGGGDFDYPGAPAGPGGAVMSAGAHGPPPGYGCAAAGYLDGRLEPLYERVGAPALRPLVIKQEPREEDEAKQLALAGLFPYQPPPPPPPPHPHASPAHLAAPHLQFQIAHCGQTTMHLQPGHPTPPPTPVPSPHAAPALGAAGLPGPGSALKGLAGAHPDLRTGGGGGGSGAGAGKAKKSVDKNSNEYRVRRERNNIAVRKSRDKAKQRNVETQQKVLELTSDNDRLRKRVEQLSRELDTLRGIFRQLPESSLVKAMGNCA.

Residues 1–55 (MESADFYEVEPRPPMSSHLQSPPHAPSNAAFGFPRGAGPAPPPAPPAAPEPLGGI) form a disordered region. Residues 1–70 (MESADFYEVE…SIDISAYIDP (70 aa)) form a required to repress E2F1:TFDP1-mediated transcription, to inhibit cell cycle and to induce adipocyte differentiation region. Low complexity predominate over residues 29 to 38 (AAFGFPRGAG). Positions 39-49 (PAPPPAPPAAP) are enriched in pro residues. Residues 54-72 (GICEHETSIDISAYIDPAA) form a required for interaction with TRIB1 region. The segment at 126 to 200 (PPGYGCAAAG…HASPAHLAAP (75 aa)) is required to induce adipocyte differentiation. The residue at position 159 (K159) is an N6-acetyllysine; alternate. A Glycyl lysine isopeptide (Lys-Gly) (interchain with G-Cter in SUMO); alternate cross-link involves residue K159. K159 participates in a covalent cross-link: Glycyl lysine isopeptide (Lys-Gly) (interchain with G-Cter in SUMO2); alternate. Disordered stretches follow at residues 176 to 195 (LFPY…ASPA) and 213 to 293 (TMHL…RERN). Residues 179 to 191 (YQPPPPPPPPHPH) show a composition bias toward pro residues. The interval 180-194 (QPPPPPPPPHPHASP) is required to functionally cooperate with SREBF1 in promoter activation. Position 193 is a phosphoserine (S193). The segment covering 220–232 (HPTPPPTPVPSPH) has biased composition (pro residues). 2 positions are modified to phosphothreonine; by GSK3: T222 and T226. Phosphoserine; by GSK3 is present on S230. A compositionally biased stretch (low complexity) spans 233–255 (AAPALGAAGLPGPGSALKGLAGA). The interaction with FOXO1 stretch occupies residues 240–359 (AGLPGPGSAL…SLVKAMGNCA (120 aa)). Over residues 261-272 (TGGGGGGSGAGA) the composition is skewed to gly residues. Positions 277 to 293 (KSVDKNSNEYRVRRERN) are enriched in basic and acidic residues. Positions 283–346 (SNEYRVRRER…DTLRGIFRQL (64 aa)) constitute a bZIP domain. The DNA-binding element occupies 286–301 (YRVRRERNNIAVRKSR). Positions 287–314 (RVRRERNNIAVRKSRDKAKQRNVETQQK) are basic motif. A leucine-zipper region spans residues 318–346 (LTSDNDRLRKRVEQLSRELDTLRGIFRQL).

It belongs to the bZIP family. C/EBP subfamily. As to quaternary structure, binds DNA as a homodimer and as a heterodimer. Can form stable heterodimers with CEBPB, CEBPD, CEBPE and CEBPG. Interacts with PRDM16. Interacts with UBN1. Interacts with ZNF638; this interaction increases transcriptional activation. Interacts with the complex TFDP2:E2F1; the interaction prevents CEBPA binding to target gene promoters and represses its transcriptional activity. Interacts with RB1. Interacts (when phosphorylated at Ser-193) with CDK2, CDK4, E2F4 and SMARCA2. Interacts with SREBPF1. Interacts with FOXO1 (via the Fork-head domain); the interaction increases when FOXO1 is deacetylated. Interacts with SIX1. Interacts (via recognition sequence) with TRIB1. Interacts (via bZIP domain) with OVOL2 (via zinc-finger domains); the interaction inhibits the transcription factor activity of CEBPA and is required to repress adipogenesis. Interacts with TAF1A and UBTF. In terms of assembly, interacts with TAF1A and UBTF. Interacts with NPM1. In terms of processing, sumoylated, sumoylation blocks the inhibitory effect on cell proliferation by disrupting the interaction with SMARCA2. Phosphorylation at Ser-193 is required for interaction with CDK2, CDK4 and SWI/SNF complex leading to cell cycle inhibition. Dephosphorylated at Ser-193 by protein phosphatase 2A (PP2A) through PI3K/AKT signaling pathway regulation. Phosphorylation at Thr-222 and Thr-226 by GSK3 is constitutive in adipose tissue and lung. In liver, both Thr-222 and Thr-226 are phosphorylated only during feeding but not during fasting. Phosphorylation of the GSK3 consensus sites selectively decreases transactivation activity on IRE-controlled promoters. Post-translationally, ubiquitinated by COP1 upon interaction with TRIB1. As to expression, isoform 2 and isoform 3 are expressed in adipose tissue and liver (at protein level).

The protein localises to the nucleus. Its subcellular location is the nucleolus. Transcription factor that coordinates proliferation arrest and the differentiation of myeloid progenitors, adipocytes, hepatocytes, and cells of the lung and the placenta. Binds directly to the consensus DNA sequence 5'-T[TG]NNGNAA[TG]-3' acting as an activator on distinct target genes. During early embryogenesis, plays essential and redundant functions with CEBPB. Essential for the transition from common myeloid progenitors (CMP) to granulocyte/monocyte progenitors (GMP). Critical for the proper development of the liver and the lung. Necessary for terminal adipocyte differentiation, is required for postnatal maintenance of systemic energy homeostasis and lipid storage. To regulate these different processes at the proper moment and tissue, interplays with other transcription factors and modulators. Down-regulates the expression of genes that maintain cells in an undifferentiated and proliferative state through E2F1 repression, which is critical for its ability to induce adipocyte and granulocyte terminal differentiation. Reciprocally E2F1 blocks adipocyte differentiation by binding to specific promoters and repressing CEBPA binding to its target gene promoters. Proliferation arrest also depends on a functional binding to SWI/SNF complex. In liver, regulates gluconeogenesis and lipogenesis through different mechanisms. To regulate gluconeogenesis, functionally cooperates with FOXO1 binding to IRE-controlled promoters and regulating the expression of target genes such as PCK1 or G6PC1. To modulate lipogenesis, interacts and transcriptionally synergizes with SREBF1 in promoter activation of specific lipogenic target genes such as ACAS2. In adipose tissue, seems to act as FOXO1 coactivator accessing to ADIPOQ promoter through FOXO1 binding sites. Its function is as follows. Can act as dominant-negative. Binds DNA and have transctivation activity, even if much less efficiently than isoform 2. Does not inhibit cell proliferation. In terms of biological role, directly and specifically enhances ribosomal DNA transcription interacting with RNA polymerase I-specific cofactors and inducing histone acetylation. The sequence is that of CCAAT/enhancer-binding protein alpha from Mus musculus (Mouse).